The chain runs to 183 residues: ATP-dependent protease subunit HslV (183 aa).

Residue Thr-13 is part of the active site. Na(+) contacts are provided by Gly-168, Cys-171, and Thr-174.

This sequence belongs to the peptidase T1B family. HslV subfamily. In terms of assembly, a double ring-shaped homohexamer of HslV is capped on each side by a ring-shaped HslU homohexamer. The assembly of the HslU/HslV complex is dependent on binding of ATP.

Its subcellular location is the cytoplasm. The catalysed reaction is ATP-dependent cleavage of peptide bonds with broad specificity.. Allosterically activated by HslU binding. In terms of biological role, protease subunit of a proteasome-like degradation complex believed to be a general protein degrading machinery. This is ATP-dependent protease subunit HslV from Xanthomonas oryzae pv. oryzae (strain MAFF 311018).